The chain runs to 405 residues: Opine dehydrogenase (405 aa).

This sequence belongs to the lysopine/nopaline/octopine/opine/vitopine dehydrogenases family.

The sequence is that of Opine dehydrogenase from Haliotis discus hannai (Japanese abalone).